The chain runs to 468 residues: Adenosylhomocysteinase (468 aa).

Positions 57, 132, and 194 each coordinate substrate. 195 to 197 (TTT) contacts NAD(+). Positions 224 and 228 each coordinate substrate. NAD(+) contacts are provided by residues Asn229, 258 to 263 (GFGDVG), Glu281, Asn316, 337 to 339 (IGH), and Asn382.

Belongs to the adenosylhomocysteinase family. It depends on NAD(+) as a cofactor.

It localises to the cytoplasm. It carries out the reaction S-adenosyl-L-homocysteine + H2O = L-homocysteine + adenosine. It functions in the pathway amino-acid biosynthesis; L-homocysteine biosynthesis; L-homocysteine from S-adenosyl-L-homocysteine: step 1/1. In terms of biological role, may play a key role in the regulation of the intracellular concentration of adenosylhomocysteine. This is Adenosylhomocysteinase from Methylobacterium nodulans (strain LMG 21967 / CNCM I-2342 / ORS 2060).